Here is a 145-residue protein sequence, read N- to C-terminus: Hemoglobin fetal subunit beta (145 aa).

One can recognise a Globin domain in the interval 1–145; sequence MLTAEEKASV…VANALAHRYH (145 aa). The heme b site is built by histidine 62 and histidine 91.

The protein belongs to the globin family. In terms of assembly, heterotetramer of two alpha chains and two beta chains.

The chain is Hemoglobin fetal subunit beta from Ovis aries (Sheep).